The primary structure comprises 367 residues: Polygalacturonase (367 aa).

The first 19 residues, 1 to 19 (MSIRLIAVLSAASIAVTSA), serve as a signal peptide directing secretion. Residues C27 and C42 are joined by a disulfide bond. N185 is a glycosylation site (N-linked (GlcNAc...) asparagine). The PbH1 1 repeat unit spans residues 187-208 (TDQLTIEDTVVKNQDDCIAVNQ). The Proton donor role is filled by D201. Residues C203 and C219 are joined by a disulfide bond. The active site involves H223. Residues 240-261 (VRNVTFSNSVVRKSRNGIHIKT) form a PbH1 2 repeat. N242 carries N-linked (GlcNAc...) asparagine glycosylation. C334 and C339 are joined by a disulfide. 2 N-linked (GlcNAc...) asparagine glycosylation sites follow: N343 and N357. A disulfide bridge links C358 with C367.

The protein belongs to the glycosyl hydrolase 28 family. Expressed in larval carcasses and gut, and adult gut.

The protein resides in the secreted. It localises to the cell wall. It carries out the reaction (1,4-alpha-D-galacturonosyl)n+m + H2O = (1,4-alpha-D-galacturonosyl)n + (1,4-alpha-D-galacturonosyl)m.. This Phaedon cochleariae (Mustard beetle) protein is Polygalacturonase.